A 20-amino-acid polypeptide reads, in one-letter code: Phosphoglycerate kinase (20 aa).

Residues 1-20 are disordered; sequence MNKKSIRNVNLKGKRVFDRV.

It belongs to the phosphoglycerate kinase family. As to quaternary structure, monomer.

It localises to the cytoplasm. The enzyme catalyses (2R)-3-phosphoglycerate + ATP = (2R)-3-phospho-glyceroyl phosphate + ADP. The protein operates within carbohydrate degradation; glycolysis; pyruvate from D-glyceraldehyde 3-phosphate: step 2/5. The protein is Phosphoglycerate kinase of Bacillus cereus.